The sequence spans 297 residues: Large ribosomal subunit protein uL24m (297 aa).

N-acetylserine is present on serine 2. The region spanning 63 to 96 is the KOW domain; sequence FIPGDRVVVMSGASKGNIAVIKSFDKRTNSFILD.

It belongs to the universal ribosomal protein uL24 family. As to quaternary structure, component of the mitochondrial large ribosomal subunit (mt-LSU). Mature yeast 74S mitochondrial ribosomes consist of a small (37S) and a large (54S) subunit. The 37S small subunit contains a 15S ribosomal RNA (15S mt-rRNA) and 34 different proteins. The 54S large subunit contains a 21S rRNA (21S mt-rRNA) and 46 different proteins. uL24m forms the wall of the exit tunnel.

The protein localises to the mitochondrion. In terms of biological role, component of the mitochondrial ribosome (mitoribosome), a dedicated translation machinery responsible for the synthesis of mitochondrial genome-encoded proteins, including at least some of the essential transmembrane subunits of the mitochondrial respiratory chain. The mitoribosomes are attached to the mitochondrial inner membrane and translation products are cotranslationally integrated into the membrane. The sequence is that of Large ribosomal subunit protein uL24m (MRPL40) from Saccharomyces cerevisiae (strain ATCC 204508 / S288c) (Baker's yeast).